The sequence spans 208 residues: Na(+)-translocating NADH-quinone reductase subunit D (208 aa).

5 consecutive transmembrane segments (helical) span residues 42–62 (IVMG…ISLV), 72–92 (IIVQ…LLQA), 103–123 (VFVG…AFAM), 131–151 (LIDG…VATV), and 178–198 (NGLF…IWGL).

It belongs to the NqrDE/RnfAE family. In terms of assembly, composed of six subunits; NqrA, NqrB, NqrC, NqrD, NqrE and NqrF.

It localises to the cell inner membrane. It carries out the reaction a ubiquinone + n Na(+)(in) + NADH + H(+) = a ubiquinol + n Na(+)(out) + NAD(+). Its function is as follows. NQR complex catalyzes the reduction of ubiquinone-1 to ubiquinol by two successive reactions, coupled with the transport of Na(+) ions from the cytoplasm to the periplasm. NqrA to NqrE are probably involved in the second step, the conversion of ubisemiquinone to ubiquinol. The sequence is that of Na(+)-translocating NADH-quinone reductase subunit D from Neisseria gonorrhoeae (strain ATCC 700825 / FA 1090).